A 118-amino-acid polypeptide reads, in one-letter code: Histone H4 (118 aa).

Residues 1-39 (MATDTGSGRGKGGKGVTLGKGSKGAKASKGGKRIRTKTQ) form a disordered region. The span at 7–22 (SGRGKGGKGVTLGKGS) shows a compositional bias: gly residues.

It belongs to the histone H4 family. As to quaternary structure, the nucleosome is a histone octamer containing two molecules each of H2A, H2B, H3 and H4 assembled in one H3-H4 heterotetramer and two H2A-H2B heterodimers. The octamer wraps approximately 147 bp of DNA.

It is found in the nucleus. The protein localises to the chromosome. In terms of biological role, core component of nucleosome. Nucleosomes wrap and compact DNA into chromatin, limiting DNA accessibility to the cellular machineries which require DNA as a template. Histones thereby play a central role in transcription regulation, DNA repair, DNA replication and chromosomal stability. DNA accessibility is regulated via a complex set of post-translational modifications of histones, also called histone code, and nucleosome remodeling. The polypeptide is Histone H4 (Entamoeba histolytica (strain ATCC 30459 / HM-1:IMSS / ABRM)).